The following is a 426-amino-acid chain: Histidine--tRNA ligase (426 aa).

The protein belongs to the class-II aminoacyl-tRNA synthetase family. In terms of assembly, homodimer.

It is found in the cytoplasm. It catalyses the reaction tRNA(His) + L-histidine + ATP = L-histidyl-tRNA(His) + AMP + diphosphate + H(+). In Streptococcus pyogenes serotype M18 (strain MGAS8232), this protein is Histidine--tRNA ligase.